A 252-amino-acid chain; its full sequence is Thiazole synthase (252 aa).

Lys-98 acts as the Schiff-base intermediate with DXP in catalysis. 1-deoxy-D-xylulose 5-phosphate-binding positions include Gly-159, 185–186 (AG), and 207–208 (AT).

It belongs to the ThiG family. In terms of assembly, homotetramer. Forms heterodimers with either ThiH or ThiS.

The protein localises to the cytoplasm. It carries out the reaction [ThiS sulfur-carrier protein]-C-terminal-Gly-aminoethanethioate + 2-iminoacetate + 1-deoxy-D-xylulose 5-phosphate = [ThiS sulfur-carrier protein]-C-terminal Gly-Gly + 2-[(2R,5Z)-2-carboxy-4-methylthiazol-5(2H)-ylidene]ethyl phosphate + 2 H2O + H(+). The protein operates within cofactor biosynthesis; thiamine diphosphate biosynthesis. Catalyzes the rearrangement of 1-deoxy-D-xylulose 5-phosphate (DXP) to produce the thiazole phosphate moiety of thiamine. Sulfur is provided by the thiocarboxylate moiety of the carrier protein ThiS. In vitro, sulfur can be provided by H(2)S. The polypeptide is Thiazole synthase (Mycolicibacterium smegmatis (strain ATCC 700084 / mc(2)155) (Mycobacterium smegmatis)).